A 153-amino-acid polypeptide reads, in one-letter code: Probable histone H2A.4 (153 aa).

Residues 1 to 12 (MDSGTKVKKGAA) show a composition bias toward basic residues. Disordered regions lie at residues 1–30 (MDSGTKVKKGAAGRRSGGGPKKKPVSRSVK) and 129–153 (KSEKAASTTKTPKSPSKATKSPKKS). The segment covering 133–147 (AASTTKTPKSPSKAT) has biased composition (low complexity). The SPKK motif motif lies at 149–152 (SPKK).

This sequence belongs to the histone H2A family. In terms of assembly, the nucleosome is a histone octamer containing two molecules each of H2A, H2B, H3 and H4 assembled in one H3-H4 heterotetramer and two H2A-H2B heterodimers. The octamer wraps approximately 147 bp of DNA. Not ubiquitinated.

It localises to the nucleus. The protein resides in the chromosome. Functionally, core component of nucleosome. Nucleosomes wrap and compact DNA into chromatin, limiting DNA accessibility to the cellular machineries which require DNA as a template. Histones thereby play a central role in transcription regulation, DNA repair, DNA replication and chromosomal stability. DNA accessibility is regulated via a complex set of post-translational modifications of histones, also called histone code, and nucleosome remodeling. The protein is Probable histone H2A.4 of Arabidopsis thaliana (Mouse-ear cress).